The primary structure comprises 368 residues: Germination protease (368 aa).

A propeptide spanning residues M1 to D15 is cleaved from the precursor.

This sequence belongs to the peptidase A25 family. In terms of assembly, homotetramer. Autoproteolytically processed. The inactive tetrameric zymogen termed p46 autoprocesses to a smaller form termed p41, which is active only during spore germination.

It carries out the reaction Endopeptidase action with P4 Glu or Asp, P1 preferably Glu &gt; Asp, P1' hydrophobic and P2' Ala.. Its function is as follows. Initiates the rapid degradation of small, acid-soluble proteins during spore germination. The sequence is that of Germination protease from Bacillus anthracis (strain A0248).